Reading from the N-terminus, the 136-residue chain is Transcription antitermination protein NusB (136 aa).

It belongs to the NusB family.

Involved in transcription antitermination. Required for transcription of ribosomal RNA (rRNA) genes. Binds specifically to the boxA antiterminator sequence of the ribosomal RNA (rrn) operons. This Paenarthrobacter aurescens (strain TC1) protein is Transcription antitermination protein NusB.